The sequence spans 193 residues: Large ribosomal subunit protein uL18 (193 aa).

Belongs to the universal ribosomal protein uL18 family. In terms of assembly, part of the 50S ribosomal subunit. Contacts the 5S and 23S rRNAs.

In terms of biological role, this is one of the proteins that bind and probably mediate the attachment of the 5S RNA into the large ribosomal subunit, where it forms part of the central protuberance. In Methanobrevibacter smithii (strain ATCC 35061 / DSM 861 / OCM 144 / PS), this protein is Large ribosomal subunit protein uL18.